The following is a 119-amino-acid chain: ATP-dependent Clp protease adapter protein ClpS (119 aa).

The tract at residues 1–29 (MICPPGENKSMAERKQGGQGNGVGSSVVT) is disordered.

This sequence belongs to the ClpS family. In terms of assembly, binds to the N-terminal domain of the chaperone ClpA.

Its function is as follows. Involved in the modulation of the specificity of the ClpAP-mediated ATP-dependent protein degradation. The protein is ATP-dependent Clp protease adapter protein ClpS of Caulobacter vibrioides (strain ATCC 19089 / CIP 103742 / CB 15) (Caulobacter crescentus).